Reading from the N-terminus, the 839-residue chain is MPLGVRGTRREFRFPVWGLLLLALWMLPRALGVEEIPGPDSHEKQGFQIVTFKWHHVQDPYIIALWILVASLAKIVFHLSHKVTSVVPESALLIVLGLILGGIVWAADHIASFTLTPTVFFFYLLPPIVLDAGYFMPNRLFFGNLGTILLYAVIGTVWNAATTGLSLYGVYLSGIMGDLSIGLLDFLLFGSLIAAVDPVAVLAVFEEVHVNDVLFIIVFGESLLNDAVTVVLYNVFDSFVSLGADKVTGVDCVKGIVSFFVVSLGGTLIGIIFAFLLSLVTRFTKHVRIIEPGFVFIISYLSYLTSEMLSLSAILAITFCGICCQKYVKANISEQSATTVRYTMKMLASGAETIIFMFLGISAVDPAIWTWNTAFILLTLVFISVYRAIGVVLQTWLLNKYRMVQLEIIDQVVMSYGGLRGAVAYALVVLLDEKKVKEKNLFVSTTIIVVFFTVIFQGLTIKPLVQWLKVKKSEHREPKLNEKLHGRAFDHILSAIEDISGQIGHNYLRDKWSNFDRKVLSKLLMRRSAQKSRDRILNVFHELNLKDAISYVAEGERRGSLAFIRSPSTDNIVNVDFSTPRPSTVEASVSYLLRENVSTVCLDMQALEQRRKSIRDTEDTVTHHTLQQYLYKPRQEYKHLYSRHELTSNEDEKQDKEIFHRTMRKRLESFKSTKLGINQTKKTAKLYKRERGQKRRNSSIPNGKIPMESPTRDFTFKEKELEFSDPEETNEYEAEEMSGGIEFLANVTQDTATDSTTGIDNPVFSPEEDQSIFTKVPPWLSPEETVVPSQRARVQIPYSPSNFRRLTPIRLSTKSVDSFLLADSPEERPRSFLPESTHM.

Positions 1–32 are cleaved as a signal peptide; it reads MPLGVRGTRREFRFPVWGLLLLALWMLPRALG. Residues 33 to 56 are Extracellular-facing; it reads VEEIPGPDSHEKQGFQIVTFKWHH. A helical transmembrane segment spans residues 57–79; it reads VQDPYIIALWILVASLAKIVFHL. Residues 80–87 are Cytoplasmic-facing; sequence SHKVTSVV. A helical membrane pass occupies residues 88-107; the sequence is PESALLIVLGLILGGIVWAA. At 108 to 116 the chain is on the extracellular side; the sequence is DHIASFTLT. A helical transmembrane segment spans residues 117–134; the sequence is PTVFFFYLLPPIVLDAGY. Over 135 to 137 the chain is Cytoplasmic; it reads FMP. The helical transmembrane segment at 138–173 threads the bilayer; sequence NRLFFGNLGTILLYAVIGTVWNAATTGLSLYGVYLS. Gly-143, Gly-146, and Thr-147 together coordinate a 1,2-diacyl-sn-glycero-3-phospho-(1D-myo-inositol). At 174-186 the chain is on the extracellular side; that stretch reads GIMGDLSIGLLDF. The helical transmembrane segment at 187–208 threads the bilayer; the sequence is LLFGSLIAAVDPVAVLAVFEEV. At 209–210 the chain is on the cytoplasmic side; the sequence is HV. Residues 211 to 242 form a helical membrane-spanning segment; the sequence is NDVLFIIVFGESLLNDAVTVVLYNVFDSFVSL. Over 243–249 the chain is Extracellular; the sequence is GADKVTG. A helical membrane pass occupies residues 250–284; sequence VDCVKGIVSFFVVSLGGTLIGIIFAFLLSLVTRFT. At 285–286 the chain is on the cytoplasmic side; that stretch reads KH. The chain crosses the membrane as a helical span at residues 287 to 309; sequence VRIIEPGFVFIISYLSYLTSEML. Over 310 to 311 the chain is Extracellular; that stretch reads SL. A helical transmembrane segment spans residues 312–328; the sequence is SAILAITFCGICCQKYV. The Cytoplasmic segment spans residues 329-335; the sequence is KANISEQ. The helical transmembrane segment at 336–364 threads the bilayer; it reads SATTVRYTMKMLASGAETIIFMFLGISAV. Residues 365-372 lie on the Extracellular side of the membrane; it reads DPAIWTWN. A helical membrane pass occupies residues 373–394; the sequence is TAFILLTLVFISVYRAIGVVLQ. Residues 395–407 are Cytoplasmic-facing; the sequence is TWLLNKYRMVQLE. Residue Met-403 coordinates a 1,2-diacyl-sn-glycero-3-phospho-(1D-myo-inositol). A helical transmembrane segment spans residues 408–431; the sequence is IIDQVVMSYGGLRGAVAYALVVLL. The Extracellular portion of the chain corresponds to 432–438; sequence DEKKVKE. The chain crosses the membrane as a helical span at residues 439-472; sequence KNLFVSTTIIVVFFTVIFQGLTIKPLVQWLKVKK. Topologically, residues 473–839 are cytoplasmic; sequence SEHREPKLNE…RSFLPESTHM (367 aa). The a 1,2-diacyl-sn-glycero-3-phospho-(1D-myo-inositol) site is built by Gln-502, Ile-503, and His-505. A phosphoserine mark is found at Ser-560 and Ser-568. The interaction with EZR stretch occupies residues 581–595; that stretch reads RPSTVEASVSYLLRE. An interaction with NHERF4 region spans residues 596 to 673; it reads NVSTVCLDMQ…RKRLESFKST (78 aa). An interaction with AHCYL1 region spans residues 597-701; sequence VSTVCLDMQA…GQKRRNSSIP (105 aa). A phosphoserine mark is found at Ser-598 and Ser-613. Residue Ser-669 is modified to Phosphoserine; by SGK1. The span at 688–697 shows a compositional bias: basic residues; the sequence is KRERGQKRRN. Residues 688–710 form a disordered region; it reads KRERGQKRRNSSIPNGKIPMESP. Phosphoserine is present on residues Ser-724, Ser-815, and Ser-818.

Belongs to the monovalent cation:proton antiporter 1 (CPA1) transporter (TC 2.A.36) family. Homodimer. Found in the forms of complex and dynamic macromolecular complexes. Binds NHERF1 and NHERF2. Interacts with CHP1, CHP2 and SHANK2. Interacts with NHERF4 and interactions decrease in response to elevated calcium ion levels. Interacts with PDZK1 (via C-terminal PDZ domain). Interacts with AHCYL1; the interaction is required for SLC9A3 activity. Interacts with EZR; interaction targets SLC9A3 to the apical membrane. Interacts with SNX27 (via PDZ domains); directs SLC9A3 membrane insertion from early endosomes to the plasma membrane. In terms of processing, phosphorylated by PKA, which inhibits activity. Phosphorylation at Ser-669 by SGK1 is associated with increased abundance at the cell membrane.

The protein resides in the apical cell membrane. It localises to the cell membrane. Its subcellular location is the recycling endosome membrane. It is found in the early endosome membrane. The enzyme catalyses Na(+)(in) + H(+)(out) = Na(+)(out) + H(+)(in). With respect to regulation, seems to switch between active and inactive modes in response to various stimuli. Activated directly or indirectly by membrane phosphatidylinositol (PIs). Regulated by a variety of auxiliary proteins, which facilitate the maturation, cell surface expression and function of the transporter. Inhibited specifically by the drug tenapanor. In terms of biological role, plasma membrane Na(+)/H(+) antiporter. Exchanges intracellular H(+) ions for extracellular Na(+) in 1:1 stoichiometry, playing a key role in salt and fluid absorption and pH homeostasis. Major apical Na(+)/H(+) exchanger in kidney and intestine playing an important role in renal and intestine Na(+) absorption and blood pressure regulation. In Didelphis virginiana (North American opossum), this protein is Sodium/hydrogen exchanger 3 (SLC9A3).